The primary structure comprises 650 residues: MQAERPLWVPDREIVERSPMAEFIDWCGERFGRSFADYDAFHDWSVSERGAFWTAVWEHCKVIGESGEKALVDGDRMLDARFFPEARLNFAENLLRKTGSGDALIFRGEDKVSYRLTWDELRALVSRLQQALRAQGIGAGDRVAAMMPNMPETIALMLATASVGAIWSSCSPDFGEQGVLDRFGQIAPKLFIVCDGYWYNGKRQDVDSKVRAVAKSLGAPTVIVPYAGDSAALAPTVEGGVTLADFIAGFQAGPLVFERLPFGHPLYILFSSGTTGVPKCIVHSAGGTLLQHLKEHRFHCGLRDGERLFYFTTCGWMMWNWLASGLAVGATLCLYDGSPFCPDGNVLFDYAAAERFAVFGTSAKYIDAVRKGGFTPARTHDLSSLRLMTSTGSPLSPEGFSFVYEGIKPDVQLASISGGTDIVSCFVLGNPLKPVWRGEIQGPGLGLAVDVWNDEGKPVRGEKGELVCTRAFPSMPVMFWNDPDGAKYRAAYFDRFDNVWCHGDFAEWTPHGGIVIHGRSDATLNPGGVRIGTAEIYNQVEQMDEVAEALCIGQDWEDDVRVVLFVRLARGVELTEALTREIKNRIRSGASPRHVPAKIIAVADIPRTKSGKIVELAVRDVVHGRPVKNKEALANPEALDLFAGLEELKS.

199–202 serves as a coordination point for CoA; it reads YNGK. Residues 392-394, Asp-504, Arg-519, and Arg-530 each bind ATP; that span reads GSP. Val-546 provides a ligand contact to Mg(2+). A CoA-binding site is contributed by Arg-587. At Lys-612 the chain carries N6-acetyllysine.

The protein belongs to the ATP-dependent AMP-binding enzyme family. The cofactor is Mg(2+). Acetylated. Deacetylation by the SIR2-homolog deacetylase activates the enzyme.

It catalyses the reaction acetoacetate + ATP + CoA = acetoacetyl-CoA + AMP + diphosphate. It functions in the pathway biopolymer metabolism; poly-(R)-3-hydroxybutanoate degradation. In terms of biological role, catalyzes the conversion of acetoacetate into acetoacetyl-CoA. Is involved in poly-3-hydroxybutyrate (PHB) degradation, which allows growth of R.meliloti on PHB cycle intermediates. This is Acetoacetyl-coenzyme A synthetase from Rhizobium meliloti (strain 1021) (Ensifer meliloti).